Reading from the N-terminus, the 150-residue chain is Arginine repressor (150 aa).

This sequence belongs to the ArgR family.

It is found in the cytoplasm. The protein operates within amino-acid biosynthesis; L-arginine biosynthesis [regulation]. Its function is as follows. Regulates arginine biosynthesis genes. In Staphylococcus saprophyticus subsp. saprophyticus (strain ATCC 15305 / DSM 20229 / NCIMB 8711 / NCTC 7292 / S-41), this protein is Arginine repressor.